A 478-amino-acid polypeptide reads, in one-letter code: Protein nucleotidyltransferase YdiU (478 aa).

ATP is bound by residues Gly-84, Gly-86, Arg-87, Lys-107, Asp-119, Gly-120, Arg-170, and Arg-177. Asp-246 serves as the catalytic Proton acceptor. Residues Asn-247 and Asp-256 each contribute to the Mg(2+) site. Asp-256 serves as a coordination point for ATP.

The protein belongs to the SELO family. Mg(2+) serves as cofactor. The cofactor is Mn(2+).

It carries out the reaction L-seryl-[protein] + ATP = 3-O-(5'-adenylyl)-L-seryl-[protein] + diphosphate. The catalysed reaction is L-threonyl-[protein] + ATP = 3-O-(5'-adenylyl)-L-threonyl-[protein] + diphosphate. It catalyses the reaction L-tyrosyl-[protein] + ATP = O-(5'-adenylyl)-L-tyrosyl-[protein] + diphosphate. The enzyme catalyses L-histidyl-[protein] + UTP = N(tele)-(5'-uridylyl)-L-histidyl-[protein] + diphosphate. It carries out the reaction L-seryl-[protein] + UTP = O-(5'-uridylyl)-L-seryl-[protein] + diphosphate. The catalysed reaction is L-tyrosyl-[protein] + UTP = O-(5'-uridylyl)-L-tyrosyl-[protein] + diphosphate. Its function is as follows. Nucleotidyltransferase involved in the post-translational modification of proteins. It can catalyze the addition of adenosine monophosphate (AMP) or uridine monophosphate (UMP) to a protein, resulting in modifications known as AMPylation and UMPylation. The polypeptide is Protein nucleotidyltransferase YdiU (Shigella boydii serotype 18 (strain CDC 3083-94 / BS512)).